Here is a 209-residue protein sequence, read N- to C-terminus: Ribosomal RNA large subunit methyltransferase E (209 aa).

5 residues coordinate S-adenosyl-L-methionine: Gly63, Trp65, Asp83, Asp99, and Asp124. The active-site Proton acceptor is the Lys164.

The protein belongs to the class I-like SAM-binding methyltransferase superfamily. RNA methyltransferase RlmE family.

It localises to the cytoplasm. The enzyme catalyses uridine(2552) in 23S rRNA + S-adenosyl-L-methionine = 2'-O-methyluridine(2552) in 23S rRNA + S-adenosyl-L-homocysteine + H(+). In terms of biological role, specifically methylates the uridine in position 2552 of 23S rRNA at the 2'-O position of the ribose in the fully assembled 50S ribosomal subunit. This chain is Ribosomal RNA large subunit methyltransferase E, found in Buchnera aphidicola subsp. Cinara cedri (strain Cc).